The sequence spans 375 residues: Alcohol dehydrogenase 1A (375 aa).

N-acetylserine is present on Ser2. The residue at position 23 (Ser23) is a Phosphoserine. Cys47 provides a ligand contact to Zn(2+). NAD(+) is bound at residue 48–52 (GTDDH). Residues His68, Cys98, Cys101, Cys104, Cys112, and Cys175 each coordinate Zn(2+). NAD(+) is bound by residues 200 to 205 (GLGGVG), Asp224, Lys229, Ile270, 293 to 295 (VGV), 318 to 320 (AIL), and Arg370.

This sequence belongs to the zinc-containing alcohol dehydrogenase family. In terms of assembly, dimer of identical or heterodimer of closely related subunits alpha, beta, or gamma that are encoded by genes ADH1A, ADH1B, and ADH1C, respectively. Zn(2+) is required as a cofactor.

The protein resides in the cytoplasm. It carries out the reaction a primary alcohol + NAD(+) = an aldehyde + NADH + H(+). The catalysed reaction is a secondary alcohol + NAD(+) = a ketone + NADH + H(+). The enzyme catalyses butan-1-ol + NAD(+) = butanal + NADH + H(+). It catalyses the reaction 1-propanol + NAD(+) = propanal + NADH + H(+). Functionally, alcohol dehydrogenase. Oxidizes primary as well as secondary alcohols. Ethanol is a very poor substrate. This chain is Alcohol dehydrogenase 1A (ADH1A), found in Homo sapiens (Human).